A 248-amino-acid polypeptide reads, in one-letter code: Cutinase (248 aa).

Positions 1-17 (MRSLAILTTLLAGHAFA) are cleaved as a signal peptide. Residues 18–28 (YPKPAPQSVNR) constitute a propeptide that is removed on maturation. Residues 31–70 (WPSINEFLSELAKVMPIGDTITAACDLISDGEDAAASLFG) are lid covering the active site of the uncomplexed enzyme. 2 cysteine pairs are disulfide-bonded: cysteine 55–cysteine 91 and cysteine 79–cysteine 153. The Nucleophile role is filled by serine 164. Cysteine 212 and cysteine 219 are disulfide-bonded. Aspartate 216 is a catalytic residue. Residue histidine 229 is the Proton donor/acceptor of the active site.

This sequence belongs to the cutinase family.

Its subcellular location is the secreted. It carries out the reaction cutin + H2O = cutin monomers.. Its activity is regulated as follows. Weakly inhibited by n-undecyl phosphonate (C11Y4). Activity unaffected by paraoxon. In terms of biological role, catalyzes the hydrolysis of complex carboxylic polyesters found in the cell wall of plants. Degrades cutin, a macromolecule that forms the structure of the plant cuticle. The sequence is that of Cutinase from Hypocrea jecorina (strain QM6a) (Trichoderma reesei).